Here is a 418-residue protein sequence, read N- to C-terminus: Light-independent protochlorophyllide reductase subunit N (418 aa).

3 residues coordinate [4Fe-4S] cluster: Cys17, Cys42, and Cys103.

This sequence belongs to the BchN/ChlN family. Protochlorophyllide reductase is composed of three subunits; ChlL, ChlN and ChlB. Forms a heterotetramer of two ChlB and two ChlN subunits. [4Fe-4S] cluster serves as cofactor.

It carries out the reaction chlorophyllide a + oxidized 2[4Fe-4S]-[ferredoxin] + 2 ADP + 2 phosphate = protochlorophyllide a + reduced 2[4Fe-4S]-[ferredoxin] + 2 ATP + 2 H2O. It participates in porphyrin-containing compound metabolism; chlorophyll biosynthesis (light-independent). Component of the dark-operative protochlorophyllide reductase (DPOR) that uses Mg-ATP and reduced ferredoxin to reduce ring D of protochlorophyllide (Pchlide) to form chlorophyllide a (Chlide). This reaction is light-independent. The NB-protein (ChlN-ChlB) is the catalytic component of the complex. The chain is Light-independent protochlorophyllide reductase subunit N from Prochlorococcus marinus (strain MIT 9313).